A 208-amino-acid polypeptide reads, in one-letter code: Thymidylate kinase (208 aa).

Glycine 10 to threonine 17 contributes to the ATP binding site.

It belongs to the thymidylate kinase family.

The catalysed reaction is dTMP + ATP = dTDP + ADP. Functionally, phosphorylation of dTMP to form dTDP in both de novo and salvage pathways of dTTP synthesis. The sequence is that of Thymidylate kinase from Bacillus cereus (strain AH187).